Reading from the N-terminus, the 299-residue chain is ATP phosphoribosyltransferase (299 aa).

The protein belongs to the ATP phosphoribosyltransferase family. Long subfamily. Mg(2+) serves as cofactor.

It is found in the cytoplasm. The catalysed reaction is 1-(5-phospho-beta-D-ribosyl)-ATP + diphosphate = 5-phospho-alpha-D-ribose 1-diphosphate + ATP. Its pathway is amino-acid biosynthesis; L-histidine biosynthesis; L-histidine from 5-phospho-alpha-D-ribose 1-diphosphate: step 1/9. Feedback inhibited by histidine. Its function is as follows. Catalyzes the condensation of ATP and 5-phosphoribose 1-diphosphate to form N'-(5'-phosphoribosyl)-ATP (PR-ATP). Has a crucial role in the pathway because the rate of histidine biosynthesis seems to be controlled primarily by regulation of HisG enzymatic activity. This Shewanella frigidimarina (strain NCIMB 400) protein is ATP phosphoribosyltransferase.